Reading from the N-terminus, the 64-residue chain is DNA gyrase inhibitor YacG (64 aa).

The Zn(2+) site is built by Cys-7, Cys-10, Cys-26, and Cys-30. The tract at residues Lys-43–Gln-64 is disordered.

It belongs to the DNA gyrase inhibitor YacG family. In terms of assembly, interacts with GyrB. Zn(2+) is required as a cofactor.

In terms of biological role, inhibits all the catalytic activities of DNA gyrase by preventing its interaction with DNA. Acts by binding directly to the C-terminal domain of GyrB, which probably disrupts DNA binding by the gyrase. The sequence is that of DNA gyrase inhibitor YacG from Aeromonas salmonicida (strain A449).